The chain runs to 962 residues: Leucine-rich repeat-containing G-protein coupled receptor 6 (962 aa).

The N-terminal stretch at 1 to 16 is a signal peptide; the sequence is MLVVLLILHAVSCAHS. One can recognise an LRRNT domain in the interval 20 to 60; that stretch reads PGAAVPVKQCPSACQCEEDGILLLVDCSEQGLSSVPTDLSP. LRR repeat units follow at residues 38–58, 59–82, 83–106, 107–131, 133–154, 155–178, 179–202, 203–226, 228–250, 251–273, 275–297, 298–321, 322–344, 345–368, 370–390, 391–414, and 416–438; these read DGIL…PTDL, SPLT…AFRN, LHFL…MLQG, LYNL…PWEL, NLLS…TLSG, MRSL…ALND, LSSL…AFRN, LSNL…CFEG, HSLE…IRTL, AKLQ…AFVG, PLLQ…AFQF, LPKL…LKGT, TSLQ…LCHL, LPKL…YHCT, LQEI…TFQQ, LGSL…AFFS, and QSLI…GLTS. A glycan (N-linked (GlcNAc...) asparagine) is linked at asparagine 71. A glycan (N-linked (GlcNAc...) asparagine) is linked at asparagine 202. Helical transmembrane passes span 559 to 579, 590 to 610, 647 to 669, 679 to 699, 723 to 743, 766 to 786, and 801 to 821; these read GMWL…LTVF, FIIG…GTLA, SILF…RAYG, AAAV…LIGV, FMVA…GTYI, VAWL…LTFS, and SVVL…YLLF. Cysteine 633 and cysteine 708 are joined by a disulfide.

It belongs to the G-protein coupled receptor 1 family.

It is found in the cell membrane. Functionally, receptor for R-spondins that potentiates the canonical Wnt signaling pathway. Upon binding to R-spondins (rspo1, rspo2, rspo3 or rspo4), associates with phosphorylated lrp6 and frizzled receptors that are activated by extracellular Wnt receptors, triggering the canonical Wnt signaling pathway to increase expression of target genes. In contrast to classical G-protein coupled receptors, does not activate heterotrimeric G-proteins to transduce the signal. The polypeptide is Leucine-rich repeat-containing G-protein coupled receptor 6 (lgr6) (Danio rerio (Zebrafish)).